A 401-amino-acid polypeptide reads, in one-letter code: MDVKKVVLAYSGGLDTSIILKWLIESYGCEVVAFSADLGQAEELDGLEAKALATGAVKARIVDLREEFVRDFVFPAFRANAIYEGQYLLGTSIARPLIAKAQIRIAEEEDADAVSHGATGKGNDQVRFELTYIALNPAIKIIAPWREWDLKSRSDLVEFARRHGIPIPVTKEKPYSSDRNMLHISYEGGILEDPWLEPDPAMFTLSVAPEEAPDAPEFVEIDFERGNPVAVNGERLSPAQLLTRLNALGGRHGIGRVDLVESRFVGMKSRGVYETPGGTIMRTAHHAVESVTMDRELMFLRDSLVPQYSRLIYNGFWYSPEMRLLQNTMDLAQENVYGTAKLKLYKGNCVVIGRRSDRSLYQPSFATFEEDDVYRQDDATGFIRLHGLRLQIESLVRGKSR.

Residues 9 to 17 and alanine 36 each bind ATP; that span reads AYSGGLDTS. Residues tyrosine 87 and serine 92 each contribute to the L-citrulline site. Glycine 117 is a binding site for ATP. The L-aspartate site is built by threonine 119, asparagine 123, and aspartate 124. Asparagine 123 serves as a coordination point for L-citrulline. L-citrulline is bound by residues arginine 127, serine 176, serine 185, glutamate 261, and tyrosine 273.

Belongs to the argininosuccinate synthase family. Type 1 subfamily. As to quaternary structure, homotetramer.

The protein resides in the cytoplasm. It carries out the reaction L-citrulline + L-aspartate + ATP = 2-(N(omega)-L-arginino)succinate + AMP + diphosphate + H(+). Its pathway is amino-acid biosynthesis; L-arginine biosynthesis; L-arginine from L-ornithine and carbamoyl phosphate: step 2/3. This Syntrophobacter fumaroxidans (strain DSM 10017 / MPOB) protein is Argininosuccinate synthase.